Here is a 338-residue protein sequence, read N- to C-terminus: Anthranilate phosphoribosyltransferase (338 aa).

5-phospho-alpha-D-ribose 1-diphosphate contacts are provided by residues glycine 81, 84-85 (GD), serine 89, 91-94 (NIST), 109-117 (KHGNRSVSS), and serine 121. Residue glycine 81 coordinates anthranilate. Serine 93 is a binding site for Mg(2+). Asparagine 112 provides a ligand contact to anthranilate. Arginine 167 provides a ligand contact to anthranilate. Mg(2+) contacts are provided by aspartate 226 and glutamate 227.

The protein belongs to the anthranilate phosphoribosyltransferase family. In terms of assembly, homodimer. Mg(2+) serves as cofactor.

It carries out the reaction N-(5-phospho-beta-D-ribosyl)anthranilate + diphosphate = 5-phospho-alpha-D-ribose 1-diphosphate + anthranilate. It participates in amino-acid biosynthesis; L-tryptophan biosynthesis; L-tryptophan from chorismate: step 2/5. In terms of biological role, catalyzes the transfer of the phosphoribosyl group of 5-phosphorylribose-1-pyrophosphate (PRPP) to anthranilate to yield N-(5'-phosphoribosyl)-anthranilate (PRA). The protein is Anthranilate phosphoribosyltransferase of Thioalkalivibrio sulfidiphilus (strain HL-EbGR7).